The sequence spans 290 residues: 33 kDa chaperonin (290 aa).

Disulfide bonds link Cys235/Cys237 and Cys268/Cys271.

Belongs to the HSP33 family. In terms of processing, under oxidizing conditions two disulfide bonds are formed involving the reactive cysteines. Under reducing conditions zinc is bound to the reactive cysteines and the protein is inactive.

The protein localises to the cytoplasm. Functionally, redox regulated molecular chaperone. Protects both thermally unfolding and oxidatively damaged proteins from irreversible aggregation. Plays an important role in the bacterial defense system toward oxidative stress. In Streptococcus equi subsp. zooepidemicus (strain MGCS10565), this protein is 33 kDa chaperonin.